Here is a 238-residue protein sequence, read N- to C-terminus: MGNSALKAHIETAQKTGVFQLTDKGLTEFPEDLQRLSGNLRTIDLSSNKIEVVPPMMGKFSLLKSLSLNNNRISRLPDELCKLKKLETLHLNGNQISQLPADFVQLLALKTLNLSGNRLKTLPAQLFKLRNLDVVDLSKNRIQAIPDEVSGLQAIELNLNQNQISQISVNISHCPRLKVLRLEENCLELSMLPPSILSDSQISLLAVEGNLFEIKKLRDLEGYDKYMEKFTATRKKFA.

8 LRR repeats span residues asparagine 39–phenylalanine 60, leucine 62–lysine 84, lysine 85–leucine 106, alanine 108–leucine 129, asparagine 131–leucine 152, glutamine 153–proline 175, arginine 176–isoleucine 196, and glutamine 201–glutamate 221.

The sequence is that of Leucine-rich repeat-containing protein 57 (lrrc57) from Xenopus laevis (African clawed frog).